We begin with the raw amino-acid sequence, 981 residues long: Anoctamin-3 (981 aa).

A compositionally biased stretch (polar residues) spans 1–28 (MVHHSGSIQSFKQQKGMNISKSEITTEA). 2 disordered regions span residues 1-32 (MVHH…SLKP) and 67-87 (PTSV…EESR). The Cytoplasmic portion of the chain corresponds to 1 to 403 (MVHHSGSIQS…LYFAWLGWYT (403 aa)). Over residues 76 to 87 (DKPEHVTSEESR) the composition is skewed to basic and acidic residues. The helical transmembrane segment at 404–424 (GMLIPAAVVGLCVFFYGLVTM) threads the bilayer. 3 N-linked (GlcNAc...) asparagine glycosylation sites follow: N425, N448, and N455. Topologically, residues 425-469 (NESQVSQEICKATEVFMCPLCDKNCSLQRLNDSCIYAKVTYLFDN) are extracellular. Residues 470–490 (GGTVFFAIFMAIWATVFLEFW) form a helical membrane-spanning segment. Residues 491–550 (KRRRSILTYTWDLIEWEEEEETLRPQFEAKYYRMEVINPITGKPEPHQPSSDKVTRLLVS) are Cytoplasmic-facing. Residues 551-571 (VSGIFFMISLVITAVFAVVVY) form a helical membrane-spanning segment. Topologically, residues 572–592 (RLVVMEQFASFKWNFVKQHWQ) are extracellular. The chain crosses the membrane as a helical span at residues 593–613 (FATSGAAVCINFIIIMLLNLA). The Cytoplasmic segment spans residues 614–640 (YEKIAYLLTNLEYPRTESEWENSFALK). A helical transmembrane segment spans residues 641-661 (MFLFQFVNLNSSIFYIAFFLG). At 662–761 (RFVGHPGKYN…MDEYLEMVLQ (100 aa)) the chain is on the extracellular side. The chain crosses the membrane as a helical span at residues 762–782 (FGFTTIFVAAFPLAPLLALLN). Topologically, residues 783-810 (NIIEIRLDAYKFVTQWRRPLPARATDIG) are cytoplasmic. The chain crosses the membrane as a helical span at residues 811-831 (IWLGILEGIGILAVITNAFVI). Topologically, residues 832-914 (AITSDYIPRF…QYWHILAARL (83 aa)) are extracellular. A glycan (N-linked (GlcNAc...) asparagine) is linked at N866. The chain crosses the membrane as a helical span at residues 915–935 (AFIIVFEHLVFGIKSFIAYLI). The Cytoplasmic segment spans residues 936–981 (PDIPKGLRERIRREKYLVQEMMYEAELEHLQQQRRKSGQPIHHEWP).

This sequence belongs to the anoctamin family. Interacts with KCNT1/Slack. Predominantly expressed in neuronal tissues. Expressed in brain.

The protein localises to the cell membrane. It catalyses the reaction a 1,2-diacyl-sn-glycero-3-phosphocholine(in) = a 1,2-diacyl-sn-glycero-3-phosphocholine(out). The enzyme catalyses a beta-D-galactosyl-(1&lt;-&gt;1')-N-acylsphing-4-enine(out) = a beta-D-galactosyl-(1&lt;-&gt;1')-N-acylsphing-4-enine(in). Functionally, has calcium-dependent phospholipid scramblase activity; scrambles phosphatidylcholine and galactosylceramide. Does not exhibit calcium-activated chloride channel (CaCC) activity. Seems to act as potassium channel regulator and may inhibit pain signaling; can facilitate KCNT1/Slack channel activity by promoting its full single-channel conductance at very low sodium concentrations and by increasing its sodium sensitivity. This is Anoctamin-3 from Mus musculus (Mouse).